The following is a 99-amino-acid chain: Integration host factor subunit alpha (99 aa).

It belongs to the bacterial histone-like protein family. As to quaternary structure, heterodimer of an alpha and a beta chain.

Functionally, this protein is one of the two subunits of integration host factor, a specific DNA-binding protein that functions in genetic recombination as well as in transcriptional and translational control. The protein is Integration host factor subunit alpha (ihfA) of Mannheimia haemolytica (Pasteurella haemolytica).